A 373-amino-acid polypeptide reads, in one-letter code: 4-hydroxy-3-methylbut-2-en-1-yl diphosphate synthase (flavodoxin) (373 aa).

4 residues coordinate [4Fe-4S] cluster: Cys-269, Cys-272, Cys-304, and Glu-311.

This sequence belongs to the IspG family. Requires [4Fe-4S] cluster as cofactor.

The enzyme catalyses (2E)-4-hydroxy-3-methylbut-2-enyl diphosphate + oxidized [flavodoxin] + H2O + 2 H(+) = 2-C-methyl-D-erythritol 2,4-cyclic diphosphate + reduced [flavodoxin]. It functions in the pathway isoprenoid biosynthesis; isopentenyl diphosphate biosynthesis via DXP pathway; isopentenyl diphosphate from 1-deoxy-D-xylulose 5-phosphate: step 5/6. Its function is as follows. Converts 2C-methyl-D-erythritol 2,4-cyclodiphosphate (ME-2,4cPP) into 1-hydroxy-2-methyl-2-(E)-butenyl 4-diphosphate. The sequence is that of 4-hydroxy-3-methylbut-2-en-1-yl diphosphate synthase (flavodoxin) from Baumannia cicadellinicola subsp. Homalodisca coagulata.